The following is a 123-amino-acid chain: UPF0482 protein YE2026 (123 aa).

A signal peptide spans Met1–Ala31. Residues Gly47–Asp66 are disordered.

This sequence belongs to the UPF0482 family.

The protein is UPF0482 protein YE2026 of Yersinia enterocolitica serotype O:8 / biotype 1B (strain NCTC 13174 / 8081).